A 413-amino-acid chain; its full sequence is Phosphoglycerate kinase (413 aa).

Residues 19–21 (DLN), Arg-34, 57–60 (HQSK), Arg-114, and Arg-154 contribute to the substrate site. ATP is bound by residues Glu-332 and 358-361 (GGHS).

It belongs to the phosphoglycerate kinase family. As to quaternary structure, monomer.

The protein localises to the cytoplasm. It carries out the reaction (2R)-3-phosphoglycerate + ATP = (2R)-3-phospho-glyceroyl phosphate + ADP. The protein operates within carbohydrate degradation; glycolysis; pyruvate from D-glyceraldehyde 3-phosphate: step 2/5. The sequence is that of Phosphoglycerate kinase from Thermococcus sibiricus (strain DSM 12597 / MM 739).